Here is a 259-residue protein sequence, read N- to C-terminus: Glutamate racemase (259 aa).

Substrate-binding positions include 7-8 (DS) and 39-40 (YG). Catalysis depends on Cys-70, which acts as the Proton donor/acceptor. A substrate-binding site is contributed by 71–72 (NT). Catalysis depends on Cys-180, which acts as the Proton donor/acceptor. 181–182 (TH) provides a ligand contact to substrate.

Belongs to the aspartate/glutamate racemases family.

The catalysed reaction is L-glutamate = D-glutamate. The protein operates within cell wall biogenesis; peptidoglycan biosynthesis. In terms of biological role, provides the (R)-glutamate required for cell wall biosynthesis. This Persephonella marina (strain DSM 14350 / EX-H1) protein is Glutamate racemase.